We begin with the raw amino-acid sequence, 254 residues long: Coenzyme F420:L-glutamate ligase (254 aa).

Residues Ile-11 to Ile-14, Ser-40 to Thr-41, and Lys-45 each bind GTP. An a divalent metal cation-binding site is contributed by Asp-109. Asn-112 provides a ligand contact to GTP. Residues Asp-150, Thr-151, and Glu-208 each coordinate a divalent metal cation. Met-206–Ile-213 contributes to the GTP binding site.

It belongs to the CofE family. As to quaternary structure, homodimer. Mg(2+) serves as cofactor. It depends on Mn(2+) as a cofactor. K(+) is required as a cofactor.

The catalysed reaction is oxidized coenzyme F420-0 + GTP + L-glutamate = oxidized coenzyme F420-1 + GDP + phosphate + H(+). The enzyme catalyses oxidized coenzyme F420-1 + GTP + L-glutamate = oxidized coenzyme F420-2 + GDP + phosphate + H(+). Its pathway is cofactor biosynthesis; coenzyme F420 biosynthesis. Its function is as follows. Catalyzes the GTP-dependent successive addition of two or more gamma-linked L-glutamates to the L-lactyl phosphodiester of 7,8-didemethyl-8-hydroxy-5-deazariboflavin (F420-0) to form coenzyme F420-0-glutamyl-glutamate (F420-2) or polyglutamated F420 derivatives. The sequence is that of Coenzyme F420:L-glutamate ligase from Methanosarcina mazei (strain ATCC BAA-159 / DSM 3647 / Goe1 / Go1 / JCM 11833 / OCM 88) (Methanosarcina frisia).